Consider the following 157-residue polypeptide: 2-C-methyl-D-erythritol 2,4-cyclodiphosphate synthase (157 aa).

D8 and H10 together coordinate a divalent metal cation. 4-CDP-2-C-methyl-D-erythritol 2-phosphate is bound by residues 8 to 10 (DVH) and 34 to 35 (HS). H42 contacts a divalent metal cation. 4-CDP-2-C-methyl-D-erythritol 2-phosphate-binding positions include 56-58 (DIG), 61-65 (FPDTD), 100-106 (AQAPKMA), 132-135 (TTTE), F139, and R142.

The protein belongs to the IspF family. As to quaternary structure, homotrimer. It depends on a divalent metal cation as a cofactor.

It carries out the reaction 4-CDP-2-C-methyl-D-erythritol 2-phosphate = 2-C-methyl-D-erythritol 2,4-cyclic diphosphate + CMP. The protein operates within isoprenoid biosynthesis; isopentenyl diphosphate biosynthesis via DXP pathway; isopentenyl diphosphate from 1-deoxy-D-xylulose 5-phosphate: step 4/6. Functionally, involved in the biosynthesis of isopentenyl diphosphate (IPP) and dimethylallyl diphosphate (DMAPP), two major building blocks of isoprenoid compounds. Catalyzes the conversion of 4-diphosphocytidyl-2-C-methyl-D-erythritol 2-phosphate (CDP-ME2P) to 2-C-methyl-D-erythritol 2,4-cyclodiphosphate (ME-CPP) with a corresponding release of cytidine 5-monophosphate (CMP). This chain is 2-C-methyl-D-erythritol 2,4-cyclodiphosphate synthase, found in Pseudomonas putida (strain GB-1).